Consider the following 72-residue polypeptide: SRY-related protein ADW5 (72 aa).

The segment at residues 1–69 (VKRPMNAFMV…KHMADYPDYK (69 aa)) is a DNA-binding region (HMG box).

The protein localises to the nucleus. The chain is SRY-related protein ADW5 from Alligator mississippiensis (American alligator).